Reading from the N-terminus, the 79-residue chain is uncharacterized protein (79 aa).

This is an uncharacterized protein from Dryophytes versicolor (chameleon treefrog).